The primary structure comprises 313 residues: Ribosomal RNA small subunit methyltransferase H (313 aa).

S-adenosyl-L-methionine-binding positions include 35–37, Asp-55, Phe-80, Asp-102, and Gln-109; that span reads GGH.

The protein belongs to the methyltransferase superfamily. RsmH family.

The protein localises to the cytoplasm. It catalyses the reaction cytidine(1402) in 16S rRNA + S-adenosyl-L-methionine = N(4)-methylcytidine(1402) in 16S rRNA + S-adenosyl-L-homocysteine + H(+). Specifically methylates the N4 position of cytidine in position 1402 (C1402) of 16S rRNA. This is Ribosomal RNA small subunit methyltransferase H from Shewanella baltica (strain OS223).